We begin with the raw amino-acid sequence, 566 residues long: Phosphatidylinositol 3,4,5-trisphosphate 3-phosphatase TPTE2 (566 aa).

4 consecutive transmembrane segments (helical) span residues 135-155 (SFAF…LLLA), 173-193 (ISLA…FVEG), 208-228 (AIIV…IKFL), and 234-254 (WIHL…HLIH). Residues 272 to 448 (RRYTRDGFDL…GYFAQVKHLY (177 aa)) enclose the Phosphatase tensin-type domain. The active-site Phosphocysteine intermediate is the cysteine 382. The region spanning 455–566 (RRILFIKRFI…ILHSFRLVFT (112 aa)) is the C2 tensin-type domain.

The protein resides in the endoplasmic reticulum membrane. It localises to the golgi apparatus membrane. The catalysed reaction is a 1,2-diacyl-sn-glycero-3-phospho-(1D-myo-inositol-3,4,5-trisphosphate) + H2O = a 1,2-diacyl-sn-glycero-3-phospho-(1D-myo-inositol-4,5-bisphosphate) + phosphate. Acts as a lipid phosphatase, removing the phosphate in the D3 position of the inositol ring from phosphatidylinositol 3,4,5-trisphosphate. In Macaca fascicularis (Crab-eating macaque), this protein is Phosphatidylinositol 3,4,5-trisphosphate 3-phosphatase TPTE2 (TPTE2).